Reading from the N-terminus, the 305-residue chain is Tetraspanin-12 (305 aa).

Residues 1 to 12 are Cytoplasmic-facing; sequence MAREDSVRCLRC. 2 S-palmitoyl cysteine lipidation sites follow: Cys-9 and Cys-12. Residues 13 to 33 form a helical membrane-spanning segment; it reads LLYALNLLFWLMSISVLGVSA. Residues 34-59 lie on the Extracellular side of the membrane; the sequence is WIRDYLNNVLTLTAETRVEEAVILTY. Residues 60–80 traverse the membrane as a helical segment; the sequence is FPVVHPVMIAVCCFLILVGML. Residues 81 to 89 lie on the Cytoplasmic side of the membrane; that stretch reads GYCGTVKRN. The S-palmitoyl cysteine moiety is linked to residue Cys-83. A helical transmembrane segment spans residues 90–110; it reads LLLLVWYFGSLLVIFCVELAC. Residues 111 to 224 lie on the Extracellular side of the membrane; sequence GVWTYEQEIT…RGTKQLQVLR (114 aa). A helical transmembrane segment spans residues 225–245; that stretch reads FLGISIGVTQILAMILTITLL. Residues 246 to 305 are Cytoplasmic-facing; that stretch reads WALYYDRRDPGADQIMSLKNDTSQQLSCHSVELLKPSLTGIFEHTSMANSFNTHFEMEEL.

Belongs to the tetraspanin (TM4SF) family. Component of a complex, at least composed of TSPAN12, FZD4 and norrin (NDP). Post-translationally, palmitoylated; required for interaction with ADAM10. The precise position of palmitoylated residues is unclear and occurs either on Cys-9, Cys-12 and/or Cys-83.

The protein resides in the cell membrane. Regulator of cell surface receptor signal transduction. Plays a central role in retinal vascularization by regulating norrin (NDP) signal transduction. Acts in concert with norrin (NDP) to promote FZD4 multimerization and subsequent activation of FZD4, leading to promote accumulation of beta-catenin (CTNNB1) and stimulate LEF/TCF-mediated transcriptional programs. Suprisingly, it only activates the norrin (NDP)-dependent activation of FZD4, while it does not activate the Wnt-dependent activation of FZD4, suggesting the existence of a Wnt-independent signaling that also promote accumulation the beta-catenin (CTNNB1). This Gallus gallus (Chicken) protein is Tetraspanin-12 (TSPAN12).